The primary structure comprises 140 residues: 3-hydroxyacyl-[acyl-carrier-protein] dehydratase FabZ (140 aa).

The active site involves histidine 47.

This sequence belongs to the thioester dehydratase family. FabZ subfamily.

It localises to the cytoplasm. The catalysed reaction is a (3R)-hydroxyacyl-[ACP] = a (2E)-enoyl-[ACP] + H2O. Functionally, involved in unsaturated fatty acids biosynthesis. Catalyzes the dehydration of short chain beta-hydroxyacyl-ACPs and long chain saturated and unsaturated beta-hydroxyacyl-ACPs. This is 3-hydroxyacyl-[acyl-carrier-protein] dehydratase FabZ from Streptococcus pneumoniae (strain 70585).